The following is a 510-amino-acid chain: uncharacterized protein (510 aa).

The N-terminal stretch at 1 to 19 (MLILLILYFLFLQLHIFDS) is a signal peptide. A helical transmembrane segment spans residues 28-48 (IYIHYAICKFIFLLEIYKLIA).

It is found in the host membrane. This is an uncharacterized protein from Sulfolobus islandicus rod-shaped virus 1 (SIRV-1).